The primary structure comprises 515 residues: ATP-dependent RNA helicase DBP3 (515 aa).

The disordered stretch occupies residues 1–67 (MAKRPLQTEA…SDSRYLPTPE (67 aa)). Residues 100–127 (TSFSFLPESSNDLYLPLEKFSSPTPIQA) carry the Q motif motif. A Helicase ATP-binding domain is found at 130–306 (WPLAFAGRDL…ASFTKNPVTV (177 aa)). Position 143–150 (143–150 (AETGSGKT)) interacts with ATP. The short motif at 252 to 255 (DEAD) is the DEAD box element. Residues 335 to 484 (RLLELLRRYQ…DVPESLLKFG (150 aa)) form the Helicase C-terminal domain.

This sequence belongs to the DEAD box helicase family. DDX5/DBP2 subfamily.

The protein resides in the nucleus. The protein localises to the nucleolus. It catalyses the reaction ATP + H2O = ADP + phosphate + H(+). In terms of biological role, ATP-dependent RNA helicase required for 60S ribosomal subunit synthesis. Involved in efficient pre-rRNA processing, predominantly at site A3, which is necessary for the normal formation of 25S and 5.8S rRNAs. This chain is ATP-dependent RNA helicase DBP3 (DBP3), found in Coccidioides immitis (strain RS) (Valley fever fungus).